We begin with the raw amino-acid sequence, 665 residues long: DNA ligase (665 aa).

NAD(+)-binding positions include 34–38 (DEEYD), 83–84 (SL), and Glu-114. The N6-AMP-lysine intermediate role is filled by Lys-116. The NAD(+) site is built by Arg-137, Glu-171, Lys-287, and Lys-311. The Zn(2+) site is built by Cys-405, Cys-408, Cys-424, and Cys-429. Residues 587-665 (KKSSKLAGLT…EDEFKKMIID (79 aa)) form the BRCT domain.

This sequence belongs to the NAD-dependent DNA ligase family. LigA subfamily. The cofactor is Mg(2+). Mn(2+) is required as a cofactor.

It carries out the reaction NAD(+) + (deoxyribonucleotide)n-3'-hydroxyl + 5'-phospho-(deoxyribonucleotide)m = (deoxyribonucleotide)n+m + AMP + beta-nicotinamide D-nucleotide.. Functionally, DNA ligase that catalyzes the formation of phosphodiester linkages between 5'-phosphoryl and 3'-hydroxyl groups in double-stranded DNA using NAD as a coenzyme and as the energy source for the reaction. It is essential for DNA replication and repair of damaged DNA. This Thermosipho africanus (strain TCF52B) protein is DNA ligase.